Here is a 697-residue protein sequence, read N- to C-terminus: Transmembrane protein 168 (697 aa).

3 helical membrane-spanning segments follow: residues L36–W56, L63–Y83, and A89–L109. Residue N111 is glycosylated (N-linked (GlcNAc...) asparagine). Transmembrane regions (helical) follow at residues M172–I192, F199–T219, P223–F243, L265–L285, F293–L313, F352–A372, and G380–F400. 2 N-linked (GlcNAc...) asparagine glycosylation sites follow: N533 and N598. The chain crosses the membrane as a helical span at residues I646–C666.

The protein belongs to the TMEM168 family.

It is found in the nucleus membrane. Its function is as follows. Plays a key role in maintaining the cardiac electrical stability by modulating cell surface expression of SCN5A. May play a role in the modulation of anxiety behavior by regulating GABAergic neuronal system in the nucleus accumbens. The chain is Transmembrane protein 168 from Homo sapiens (Human).